Reading from the N-terminus, the 242-residue chain is Protein HTATIP2 (242 aa).

Alanine 2 carries the post-translational modification N-acetylalanine. Residues 2–25 are required for interaction with elongation factor EEF1A1; it reads ADKEALPKLREDFKMQNKSVFILG. Residues serine 27, glycine 28, glutamate 29, threonine 30, arginine 52, arginine 53, leucine 92, glycine 93, tyrosine 143, lysine 147, leucine 170, and arginine 178 each contribute to the NADPH site. Tyrosine 143 functions as the Proton acceptor in the catalytic mechanism. Residue lysine 147 is part of the active site.

Monomer. Forms homodimers during oxidative stress. Interacts (via N-terminus) with elongation factor EEF1A1 (via middle-region); the interaction is direct and competes with EEF1A1 binding to guanyl-nucleotide exchange factor EEF1B2, thereby inhibiting GDP for GTP exchange and reactivation of EEF1A1. Interacts with nuclear transport receptors XPO4, IPO5/RANBP5, IPO7, IPO9 and KPNB1 as well as GCN1L1/GCN1 and LRPPRC probably through their HEAT repeats. Binds NCOA5/CIA.

Its subcellular location is the cytoplasm. In terms of biological role, represses translation by preventing reactivation of elongation factor eEF1A. May also inhibit nuclear import by competing with nuclear import substrates for binding to a subset of nuclear transport receptors. Has additionally been proposed to act as a redox sensor involved in cellular oxidative stress surveillance. In Mus musculus (Mouse), this protein is Protein HTATIP2.